A 669-amino-acid polypeptide reads, in one-letter code: DNA ligase (669 aa).

NAD(+)-binding positions include 34-38 (DAEYD), 83-84 (SL), and Glu113. Lys115 acts as the N6-AMP-lysine intermediate in catalysis. Residues Arg136, Glu170, Lys286, and Lys310 each contribute to the NAD(+) site. 4 residues coordinate Zn(2+): Cys404, Cys407, Cys422, and Cys427. One can recognise a BRCT domain in the interval 591–669 (IADSPFAGKT…EEALVKAISH (79 aa)).

The protein belongs to the NAD-dependent DNA ligase family. LigA subfamily. Mg(2+) is required as a cofactor. It depends on Mn(2+) as a cofactor.

The enzyme catalyses NAD(+) + (deoxyribonucleotide)n-3'-hydroxyl + 5'-phospho-(deoxyribonucleotide)m = (deoxyribonucleotide)n+m + AMP + beta-nicotinamide D-nucleotide.. Its function is as follows. DNA ligase that catalyzes the formation of phosphodiester linkages between 5'-phosphoryl and 3'-hydroxyl groups in double-stranded DNA using NAD as a coenzyme and as the energy source for the reaction. It is essential for DNA replication and repair of damaged DNA. In Halalkalibacterium halodurans (strain ATCC BAA-125 / DSM 18197 / FERM 7344 / JCM 9153 / C-125) (Bacillus halodurans), this protein is DNA ligase.